Here is an 89-residue protein sequence, read N- to C-terminus: Large ribosomal subunit protein bL28 (89 aa).

This sequence belongs to the bacterial ribosomal protein bL28 family.

This is Large ribosomal subunit protein bL28 from Chlamydia felis (strain Fe/C-56) (Chlamydophila felis).